Consider the following 115-residue polypeptide: U3-lycotoxin-Ls1a (115 aa).

The N-terminal stretch at 1–20 (MKFVLLFGVLLVTLFSYSSA) is a signal peptide. Residues 21-44 (EMLDDFDQADEDELLSSIEKEEAR) constitute a propeptide that is removed on maturation. 4 disulfides stabilise this stretch: C48/C63, C55/C72, C62/C87, and C74/C85.

The protein belongs to the neurotoxin 19 (CSTX) family. 01 subfamily. Expressed by the venom gland.

It localises to the secreted. This is U3-lycotoxin-Ls1a from Lycosa singoriensis (Wolf spider).